Here is a 101-residue protein sequence, read N- to C-terminus: Small ribosomal subunit protein uS14 (101 aa).

Belongs to the universal ribosomal protein uS14 family. Part of the 30S ribosomal subunit. Contacts proteins S3 and S10.

In terms of biological role, binds 16S rRNA, required for the assembly of 30S particles and may also be responsible for determining the conformation of the 16S rRNA at the A site. This chain is Small ribosomal subunit protein uS14, found in Synechococcus sp. (strain JA-3-3Ab) (Cyanobacteria bacterium Yellowstone A-Prime).